The primary structure comprises 111 residues: MSDTLTRLAAVLEERKNAAPDSSYVASLYHKGLNKILEKVGEESVETIIAAKDAAASGDCQDLIYETADLWFHSLVMLSALGQHPQAVLDELERRFGLSGHAEKAARQPSA.

It belongs to the PRA-PH family.

Its subcellular location is the cytoplasm. It carries out the reaction 1-(5-phospho-beta-D-ribosyl)-ATP + H2O = 1-(5-phospho-beta-D-ribosyl)-5'-AMP + diphosphate + H(+). Its pathway is amino-acid biosynthesis; L-histidine biosynthesis; L-histidine from 5-phospho-alpha-D-ribose 1-diphosphate: step 2/9. The chain is Phosphoribosyl-ATP pyrophosphatase (hisE) from Pseudomonas aeruginosa (strain ATCC 15692 / DSM 22644 / CIP 104116 / JCM 14847 / LMG 12228 / 1C / PRS 101 / PAO1).